A 293-amino-acid polypeptide reads, in one-letter code: 4-hydroxy-tetrahydrodipicolinate synthase (293 aa).

Residue serine 45 coordinates pyruvate. Catalysis depends on tyrosine 133, which acts as the Proton donor/acceptor. The active-site Schiff-base intermediate with substrate is lysine 161. Isoleucine 203 serves as a coordination point for pyruvate.

It belongs to the DapA family. As to quaternary structure, homotetramer; dimer of dimers.

It localises to the cytoplasm. It catalyses the reaction L-aspartate 4-semialdehyde + pyruvate = (2S,4S)-4-hydroxy-2,3,4,5-tetrahydrodipicolinate + H2O + H(+). The protein operates within amino-acid biosynthesis; L-lysine biosynthesis via DAP pathway; (S)-tetrahydrodipicolinate from L-aspartate: step 3/4. Its function is as follows. Catalyzes the condensation of (S)-aspartate-beta-semialdehyde [(S)-ASA] and pyruvate to 4-hydroxy-tetrahydrodipicolinate (HTPA). The polypeptide is 4-hydroxy-tetrahydrodipicolinate synthase (Psychromonas ingrahamii (strain DSM 17664 / CCUG 51855 / 37)).